A 126-amino-acid chain; its full sequence is MASQTQGIQQLLAAEKRAAEKINEARKRKLQRTKQAKQEAQAEVEKYKQQREAEFKAFEQQYLGTKEDIESKIRRDTEDQISGMKQSVAGNKQAVIVRLLQLVCDIKPELHHNLTLQKKLHGQFAA.

Belongs to the V-ATPase G subunit family. V-ATPase is a heteromultimeric enzyme made up of two complexes: the ATP-hydrolytic V1 complex and the proton translocation V0 complex. The V1 complex consists of three catalytic AB heterodimers that form a heterohexamer, three peripheral stalks each consisting of EG heterodimers, one central rotor including subunits D and F, and the regulatory subunits C and H. The proton translocation complex V0 consists of the proton transport subunit a, a ring of proteolipid subunits c9c'', rotary subunit d, subunits e and f, and the accessory subunits vah-19/Ac45 and vah-20/PRR. Interacts with ced-1.

Functionally, subunit of the V1 complex of vacuolar(H+)-ATPase (V-ATPase), a multisubunit enzyme composed of a peripheral complex (V1) that hydrolyzes ATP and a membrane integral complex (V0) that translocates protons. V-ATPase is responsible for acidifying and maintaining the pH of intracellular compartments and in some cell types, is targeted to the plasma membrane, where it is responsible for acidifying the extracellular environment. In neurons, required for necrotic cell death by promoting intracellular acidification. The polypeptide is Probable V-type proton ATPase subunit G (Caenorhabditis elegans).